A 278-amino-acid chain; its full sequence is HTH-type transcriptional activator RhaS (278 aa).

The HTH araC/xylS-type domain maps to 174-272 (NLLLAWLEDH…NWSPRDIRQG (99 aa)). 2 DNA-binding regions (H-T-H motif) span residues 191-212 (DAVADQFSLSLRTLHRQLKQQT) and 239-262 (VTDIAYRCGFSDSNHFSTLFRREF).

In terms of assembly, binds DNA as a dimer.

The protein resides in the cytoplasm. Functionally, activates expression of the rhaBAD and rhaT operons. This is HTH-type transcriptional activator RhaS from Shigella sonnei (strain Ss046).